The following is a 553-amino-acid chain: Protein YloV (553 aa).

The DhaL domain occupies 9-201 (RTFAEMILAG…LLCVYEGFLA (193 aa)).

This Bacillus subtilis (strain 168) protein is Protein YloV (yloV).